The chain runs to 141 residues: MNRTMFKSKIHRATVTHADLHYVGSVTVDLDLLEAADILPGELVSIVDITNGARLETYTIAGERGSGVIGINGAAAHLMHENDLVILITYAQMTTEEAKAYEPKVVHVDQDNRIIQLGNDPAEGIAPGMTRPPFALNNAAL.

Ser-25 acts as the Schiff-base intermediate with substrate; via pyruvic acid in catalysis. Ser-25 is subject to Pyruvic acid (Ser). Thr-57 serves as a coordination point for substrate. The active-site Proton donor is Tyr-58. 73 to 75 contacts substrate; the sequence is GAA.

It belongs to the PanD family. In terms of assembly, heterooctamer of four alpha and four beta subunits. Pyruvate is required as a cofactor. Post-translationally, is synthesized initially as an inactive proenzyme, which is activated by self-cleavage at a specific serine bond to produce a beta-subunit with a hydroxyl group at its C-terminus and an alpha-subunit with a pyruvoyl group at its N-terminus.

Its subcellular location is the cytoplasm. It carries out the reaction L-aspartate + H(+) = beta-alanine + CO2. The protein operates within cofactor biosynthesis; (R)-pantothenate biosynthesis; beta-alanine from L-aspartate: step 1/1. In terms of biological role, catalyzes the pyruvoyl-dependent decarboxylation of aspartate to produce beta-alanine. The protein is Aspartate 1-decarboxylase of Pseudarthrobacter chlorophenolicus (strain ATCC 700700 / DSM 12829 / CIP 107037 / JCM 12360 / KCTC 9906 / NCIMB 13794 / A6) (Arthrobacter chlorophenolicus).